We begin with the raw amino-acid sequence, 474 residues long: Gasdermin-C (474 aa).

A triggers pyroptosis region spans residues 1–237; that stretch reads MLYTFDQVSK…TCAILLSANA (237 aa).

Belongs to the gasdermin family. In terms of assembly, homooligomer; homooligomeric ring-shaped pore complex containing 27-28 subunits when inserted in the membrane. In terms of processing, cleavage by CASP8 relieves autoinhibition by releasing the N-terminal moiety (Gasdermin-C, N-terminal) that initiates pyroptosis. Palmitoylated.

It is found in the cytoplasm. The protein localises to the cytosol. Its subcellular location is the cell membrane. Its activity is regulated as follows. The full-length protein before cleavage is inactive: intramolecular interactions between N- and C-terminal domains mediate autoinhibition in the absence of activation signal. The intrinsic pyroptosis-inducing activity is carried by the released N-terminal moiety (Gasdermin-C, N-terminal) following cleavage by caspase CASP8. Its function is as follows. This form constitutes the precursor of the pore-forming protein: upon cleavage, the released N-terminal moiety (Gasdermin-C, N-terminal) binds to membranes and forms pores, triggering pyroptosis. Functionally, pore-forming protein that causes membrane permeabilization and pyroptosis. Produced by the cleavage of gasdermin-C by caspase CASP8 in response to death signals. After cleavage, moves to the plasma membrane where it strongly binds to membrane inner leaflet lipids. Homooligomerizes within the membrane and forms pores of 10-15 nanometers (nm) of inner diameter, triggering pyroptosis. This is Gasdermin-C from Rattus norvegicus (Rat).